Consider the following 530-residue polypeptide: Glutamate--cysteine ligase (530 aa).

The protein belongs to the glutamate--cysteine ligase type 1 family. Type 1 subfamily.

The catalysed reaction is L-cysteine + L-glutamate + ATP = gamma-L-glutamyl-L-cysteine + ADP + phosphate + H(+). Its pathway is sulfur metabolism; glutathione biosynthesis; glutathione from L-cysteine and L-glutamate: step 1/2. This Azotobacter vinelandii (strain DJ / ATCC BAA-1303) protein is Glutamate--cysteine ligase.